A 164-amino-acid chain; its full sequence is Protein phosphatase 1 regulatory subunit 14C (164 aa).

The segment covering 1–19 (MSVVTGGGEAAGGGGGGGA) has biased composition (gly residues). The tract at residues 1–70 (MSVVTGGGEA…QQQRRHQQGK (70 aa)) is disordered. The residue at position 2 (serine 2) is an N-acetylserine. Serine 25 is modified (phosphoserine). Residue arginine 27 is modified to Omega-N-methylarginine. A Phosphoserine modification is found at serine 33. Low complexity predominate over residues 50-62 (VTTVAAAGQVQQQ). Position 72 is a phosphothreonine; by ILK1 (threonine 72).

The protein belongs to the PP1 inhibitor family. In terms of processing, the main inhibitory site appears to be Thr-72. Has over 600-fold higher inhibitory activity when phosphorylated, creating a molecular switch for regulating the phosphorylation status of PPP1CA substrates and smooth muscle contraction. In terms of tissue distribution, detected in heart, muscle, spinal cord, hippocampus, hypothalamus, thalamus, midbrain, brain stem, cerebellum, brain cortex and olfactory bulb.

The protein localises to the endomembrane system. In terms of biological role, inhibitor of the PP1 regulatory subunit PPP1CA. This Mus musculus (Mouse) protein is Protein phosphatase 1 regulatory subunit 14C (Ppp1r14c).